The primary structure comprises 723 residues: Catalase-peroxidase (723 aa).

The tryptophyl-tyrosyl-methioninium (Trp-Tyr) (with M-252) cross-link spans W98–Y226. The Proton acceptor role is filled by H99. The tryptophyl-tyrosyl-methioninium (Tyr-Met) (with W-98) cross-link spans Y226–M252. A heme b-binding site is contributed by H267. Positions H267–E286 are disordered.

Belongs to the peroxidase family. Peroxidase/catalase subfamily. Homodimer or homotetramer. It depends on heme b as a cofactor. Formation of the three residue Trp-Tyr-Met cross-link is important for the catalase, but not the peroxidase activity of the enzyme.

The catalysed reaction is H2O2 + AH2 = A + 2 H2O. The enzyme catalyses 2 H2O2 = O2 + 2 H2O. Functionally, bifunctional enzyme with both catalase and broad-spectrum peroxidase activity. The polypeptide is Catalase-peroxidase (Thioalkalivibrio sulfidiphilus (strain HL-EbGR7)).